Consider the following 50-residue polypeptide: uncharacterized protein (50 aa).

A disordered region spans residues 1-50 (MKTGFWQQVLPKRAGRRKEHPVQYMPHKKEENATGLMNPSLHTSHSAILK). Polar residues predominate over residues 35-50 (GLMNPSLHTSHSAILK).

This is an uncharacterized protein from Treponema pallidum (strain Nichols).